A 132-amino-acid chain; its full sequence is Small ribosomal subunit protein uS8 (132 aa).

This sequence belongs to the universal ribosomal protein uS8 family. Part of the 30S ribosomal subunit. Contacts proteins S5 and S12.

One of the primary rRNA binding proteins, it binds directly to 16S rRNA central domain where it helps coordinate assembly of the platform of the 30S subunit. This chain is Small ribosomal subunit protein uS8, found in Anoxybacillus flavithermus (strain DSM 21510 / WK1).